The sequence spans 185 residues: NADH-quinone oxidoreductase subunit B (185 aa).

4 residues coordinate [4Fe-4S] cluster: C38, C39, C104, and C133. Residues 165 to 176 (AAEAYREEERQA) are compositionally biased toward basic and acidic residues. Residues 165–185 (AAEAYREEERQAARSALGPRS) are disordered.

It belongs to the complex I 20 kDa subunit family. In terms of assembly, NDH-1 is composed of 14 different subunits. Subunits NuoB, C, D, E, F, and G constitute the peripheral sector of the complex. [4Fe-4S] cluster serves as cofactor.

The protein resides in the cell membrane. It catalyses the reaction a quinone + NADH + 5 H(+)(in) = a quinol + NAD(+) + 4 H(+)(out). Functionally, NDH-1 shuttles electrons from NADH, via FMN and iron-sulfur (Fe-S) centers, to quinones in the respiratory chain. The immediate electron acceptor for the enzyme in this species is believed to be ubiquinone. Couples the redox reaction to proton translocation (for every two electrons transferred, four hydrogen ions are translocated across the cytoplasmic membrane), and thus conserves the redox energy in a proton gradient. In Thermomicrobium roseum (strain ATCC 27502 / DSM 5159 / P-2), this protein is NADH-quinone oxidoreductase subunit B.